A 299-amino-acid chain; its full sequence is Delta-9 desaturase-like 5 protein (299 aa).

The next 2 membrane-spanning stretches (helical) occupy residues 31-51 (ADII…LAPF) and 55-75 (WEAL…ITFS). A Histidine box-1 motif is present at residues 77–82 (HRNLAH). Positions 114–118 (HRFHH) match the Histidine box-2 motif. Transmembrane regions (helical) follow at residues 174-194 (IGFH…LPYL) and 199-219 (GVGG…CHIW). A Histidine box-3 motif is present at residues 246–250 (HNNHH).

Belongs to the fatty acid desaturase type 1 family. Fe cation serves as cofactor.

Its subcellular location is the endoplasmic reticulum membrane. It participates in lipid metabolism; polyunsaturated fatty acid biosynthesis. This Arabidopsis thaliana (Mouse-ear cress) protein is Delta-9 desaturase-like 5 protein.